A 615-amino-acid chain; its full sequence is uncharacterized protein (615 aa).

Belongs to the mycobacterial PPE family.

This is an uncharacterized protein from Mycobacterium tuberculosis (strain CDC 1551 / Oshkosh).